The primary structure comprises 1242 residues: ATP-dependent helicase/nuclease subunit A (1242 aa).

Residues 13 to 486 (SQWTDDQWKA…IDLAKNFRSR (474 aa)) form the UvrD-like helicase ATP-binding domain. 34 to 41 (AAAGSGKT) contributes to the ATP binding site. One can recognise a UvrD-like helicase C-terminal domain in the interval 506 to 806 (GEIEYDADAE…RIMTIHKSKG (301 aa)).

This sequence belongs to the helicase family. AddA subfamily. Heterodimer of AddA and AddB/RexB. Requires Mg(2+) as cofactor.

The enzyme catalyses Couples ATP hydrolysis with the unwinding of duplex DNA by translocating in the 3'-5' direction.. It catalyses the reaction ATP + H2O = ADP + phosphate + H(+). In terms of biological role, the heterodimer acts as both an ATP-dependent DNA helicase and an ATP-dependent, dual-direction single-stranded exonuclease. Recognizes the chi site generating a DNA molecule suitable for the initiation of homologous recombination. The AddA nuclease domain is required for chi fragment generation; this subunit has the helicase and 3' -&gt; 5' nuclease activities. The polypeptide is ATP-dependent helicase/nuclease subunit A (Bacillus cytotoxicus (strain DSM 22905 / CIP 110041 / 391-98 / NVH 391-98)).